The sequence spans 337 residues: tRNA N6-adenosine threonylcarbamoyltransferase (337 aa).

Fe cation-binding residues include His114 and His118. Substrate-binding positions include 136 to 140, Asp169, Gly182, Asp186, and Asn275; that span reads LVSGG. Fe cation is bound at residue Asp301.

It belongs to the KAE1 / TsaD family. Requires Fe(2+) as cofactor.

The protein resides in the cytoplasm. The catalysed reaction is L-threonylcarbamoyladenylate + adenosine(37) in tRNA = N(6)-L-threonylcarbamoyladenosine(37) in tRNA + AMP + H(+). Its function is as follows. Required for the formation of a threonylcarbamoyl group on adenosine at position 37 (t(6)A37) in tRNAs that read codons beginning with adenine. Is involved in the transfer of the threonylcarbamoyl moiety of threonylcarbamoyl-AMP (TC-AMP) to the N6 group of A37, together with TsaE and TsaB. TsaD likely plays a direct catalytic role in this reaction. The protein is tRNA N6-adenosine threonylcarbamoyltransferase of Streptococcus thermophilus (strain ATCC BAA-491 / LMD-9).